We begin with the raw amino-acid sequence, 503 residues long: Probable zinc metalloprotease UREG_01421 (503 aa).

The signal sequence occupies residues 1-24; that stretch reads MHSLSSALAGSTFVLLFLCLLASA. A glycan (N-linked (GlcNAc...) asparagine) is linked at Asn-105. The Zn(2+) site is built by His-176, Asp-196, and Glu-232. A glycan (N-linked (GlcNAc...) asparagine) is linked at Asn-247. Asp-259 is a binding site for Zn(2+). Residues 416-503 enclose the Fibronectin type-III domain; the sequence is MPRNVRVSTR…RGVAVLPFPA (88 aa). N-linked (GlcNAc...) asparagine glycosylation is present at Asn-429.

Belongs to the peptidase M28 family. M28B subfamily. The cofactor is Zn(2+).

It localises to the secreted. This chain is Probable zinc metalloprotease UREG_01421, found in Uncinocarpus reesii (strain UAMH 1704).